Consider the following 701-residue polypeptide: Glycine--tRNA ligase beta subunit (701 aa).

Belongs to the class-II aminoacyl-tRNA synthetase family. In terms of assembly, tetramer of two alpha and two beta subunits.

Its subcellular location is the cytoplasm. It carries out the reaction tRNA(Gly) + glycine + ATP = glycyl-tRNA(Gly) + AMP + diphosphate. The polypeptide is Glycine--tRNA ligase beta subunit (Anaeromyxobacter sp. (strain K)).